The sequence spans 116 residues: Large ribosomal subunit protein bL20 (116 aa).

The protein belongs to the bacterial ribosomal protein bL20 family.

Its function is as follows. Binds directly to 23S ribosomal RNA and is necessary for the in vitro assembly process of the 50S ribosomal subunit. It is not involved in the protein synthesizing functions of that subunit. In Nitratiruptor sp. (strain SB155-2), this protein is Large ribosomal subunit protein bL20.